The chain runs to 623 residues: Sulfite reductase [NADPH] flavoprotein alpha-component (623 aa).

Positions 1–32 (MSFQKNEYSHKNVSEDNNGQGGNPPIASPLND) are disordered. In terms of domain architecture, Flavodoxin-like spans 87 to 225 (LTIIFASQTG…AAEEWRKNAL (139 aa)). FMN-binding positions include 93–98 (SQTGNA), 140–143 (STNG), and 176–185 (LGDSSYEFFC). Residues 258 to 472 (QNPYTATLLT…VEHNNNFKLP (215 aa)) form the FAD-binding FR-type domain. Residues T346, A380, 410–413 (RLYS), 428–430 (TVG), Y434, and 443–446 (GGAS) each bind FAD. Residues 543–544 (SR), 549–553 (KVYVQ), and D585 contribute to the NADP(+) site. Y623 is an FAD binding site.

It belongs to the NADPH-dependent sulphite reductase flavoprotein subunit CysJ family. The protein in the N-terminal section; belongs to the flavodoxin family. In the C-terminal section; belongs to the flavoprotein pyridine nucleotide cytochrome reductase family. In terms of assembly, alpha(8)-beta(8). The alpha component is a flavoprotein, the beta component is a hemoprotein. The cofactor is FAD. FMN is required as a cofactor.

The enzyme catalyses hydrogen sulfide + 3 NADP(+) + 3 H2O = sulfite + 3 NADPH + 4 H(+). The protein operates within sulfur metabolism; hydrogen sulfide biosynthesis; hydrogen sulfide from sulfite (NADPH route): step 1/1. Its function is as follows. Component of the sulfite reductase complex that catalyzes the 6-electron reduction of sulfite to sulfide. This is one of several activities required for the biosynthesis of L-cysteine from sulfate. The flavoprotein component catalyzes the electron flow from NADPH -&gt; FAD -&gt; FMN to the hemoprotein component. The sequence is that of Sulfite reductase [NADPH] flavoprotein alpha-component from Vibrio parahaemolyticus serotype O3:K6 (strain RIMD 2210633).